Consider the following 61-residue polypeptide: Myrmicitoxin(1)-Pm5a (61 aa).

The first 23 residues, 1 to 23 (MKAIIFLFAVLTVVAIIIPIISG), serve as a signal peptide directing secretion. Residues 24 to 33 (EPNAGPLAAS) constitute a propeptide that is removed on maturation. Glutamine amide is present on Gln-60.

The protein belongs to the formicidae venom clade 2 family. Expressed by the venom gland.

The protein resides in the secreted. Functionally, toxin that causes a rapid and irreversible paralysis when intrathoracically injected into insects (blowflies). Does not cause spontaneous nocifensive behaviors by intraplantar injection in mice. The chain is Myrmicitoxin(1)-Pm5a from Pogonomyrmex maricopa (Maricopa harvester ant).